A 95-amino-acid chain; its full sequence is MKITKVAVAGTLESSDVQVRVQPFDSLDIEINSSVAKQFGEQIEATVREVLAKLGITAAQVIVEDKGALDCVLQARVKTAAMRATDETINWEAVL.

Ser-14 is modified (O-(phosphoribosyl dephospho-coenzyme A)serine).

This sequence belongs to the CitD family. As to quaternary structure, oligomer with a subunit composition of (alpha,beta,gamma)6.

Its subcellular location is the cytoplasm. In terms of biological role, covalent carrier of the coenzyme of citrate lyase. This Haemophilus influenzae (strain PittEE) protein is Citrate lyase acyl carrier protein.